We begin with the raw amino-acid sequence, 326 residues long: Probable GTP 3',8-cyclase (326 aa).

The Radical SAM core domain maps to 6-235 (LYGRPVLSLR…NRPRYIIRTQ (230 aa)). Arginine 15 provides a ligand contact to GTP. Residues cysteine 22, cysteine 26, and cysteine 29 each coordinate [4Fe-4S] cluster. Lysine 62 lines the GTP pocket. Position 66 (glycine 66) interacts with S-adenosyl-L-methionine. Threonine 92 contributes to the GTP binding site. Serine 116 is an S-adenosyl-L-methionine binding site. Lysine 153 is a binding site for GTP. [4Fe-4S] cluster contacts are provided by cysteine 253 and cysteine 256. 258–260 (RLR) provides a ligand contact to GTP. Position 270 (cysteine 270) interacts with [4Fe-4S] cluster.

It belongs to the radical SAM superfamily. MoaA family. [4Fe-4S] cluster serves as cofactor.

The enzyme catalyses GTP + AH2 + S-adenosyl-L-methionine = (8S)-3',8-cyclo-7,8-dihydroguanosine 5'-triphosphate + 5'-deoxyadenosine + L-methionine + A + H(+). It functions in the pathway cofactor biosynthesis; molybdopterin biosynthesis. In terms of biological role, catalyzes the cyclization of GTP to (8S)-3',8-cyclo-7,8-dihydroguanosine 5'-triphosphate. This is Probable GTP 3',8-cyclase from Thermoplasma volcanium (strain ATCC 51530 / DSM 4299 / JCM 9571 / NBRC 15438 / GSS1).